Consider the following 696-residue polypeptide: DEAD-box ATP-dependent RNA helicase 7 (696 aa).

The interval 1-116 (MPSLPVAAAE…GDEDPADPNA (116 aa)) is disordered. Residues 16-97 (ESASKKSKRK…KVVVEEEEED (82 aa)) adopt a coiled-coil conformation. A compositionally biased stretch (basic and acidic residues) spans 27–38 (KAAEVEVEASSR). A compositionally biased stretch (basic residues) spans 39-49 (KKEKKEKKRKA). The segment covering 67-77 (STSSDEPAPAA) has biased composition (low complexity). Positions 92 to 112 (EEEEEDDDEGELTASGDEDPA) are enriched in acidic residues. Residues 115–143 (NALANFRISESLREKLKSKGIKALFPIQA) carry the Q motif motif. Residues 146–328 (FDLVLDGHDL…LRFLKSGKKT (183 aa)) form the Helicase ATP-binding domain. Residue 159–166 (ARTGQGKT) participates in ATP binding. Residues 274-277 (DEAD) carry the DEAD box motif. Residues 357 to 500 (QVIPDIIRCY…ISAPQPTDVA (144 aa)) form the Helicase C-terminal domain. Residues 641–696 (LPPLQEREQSGGSRGGGRFGNRRFSGGGGGRGGGGRGFGGGRGRGGGGGNRFNKRY) are disordered. A compositionally biased stretch (gly residues) spans 652 to 690 (GSRGGGRFGNRRFSGGGGGRGGGGRGFGGGRGRGGGGGN).

This sequence belongs to the DEAD box helicase family. DDX21/DDX50 subfamily.

Its subcellular location is the nucleus. The enzyme catalyses ATP + H2O = ADP + phosphate + H(+). The sequence is that of DEAD-box ATP-dependent RNA helicase 7 from Oryza sativa subsp. japonica (Rice).